The following is a 218-amino-acid chain: Ras-related protein RabT2 (218 aa).

32 to 39 (GDYKTGKG) serves as a coordination point for GTP. Residues 54–61 (VSSIGVDF) carry the Effector region motif. GTP-binding positions include 80 to 84 (DANSC) and 140 to 143 (NKCD). A Cysteine methyl ester modification is found at Cys-215. Cys-215 carries the S-geranylgeranyl cysteine lipid modification. A propeptide spans 216-218 (NIL) (removed in mature form).

Belongs to the small GTPase superfamily. Rab family.

The protein localises to the cell membrane. The protein is Ras-related protein RabT2 (rabT2) of Dictyostelium discoideum (Social amoeba).